Consider the following 246-residue polypeptide: uncharacterized protein (246 aa).

This is an uncharacterized protein from Escherichia coli O157:H7.